A 424-amino-acid chain; its full sequence is Glutamate-1-semialdehyde 2,1-aminomutase (424 aa).

N6-(pyridoxal phosphate)lysine is present on K266.

The protein belongs to the class-III pyridoxal-phosphate-dependent aminotransferase family. HemL subfamily. In terms of assembly, homodimer. It depends on pyridoxal 5'-phosphate as a cofactor.

The protein localises to the cytoplasm. The enzyme catalyses (S)-4-amino-5-oxopentanoate = 5-aminolevulinate. Its pathway is porphyrin-containing compound metabolism; protoporphyrin-IX biosynthesis; 5-aminolevulinate from L-glutamyl-tRNA(Glu): step 2/2. The protein is Glutamate-1-semialdehyde 2,1-aminomutase of Azoarcus sp. (strain BH72).